A 250-amino-acid polypeptide reads, in one-letter code: MKFLGIIPARYASTRFPAKPLAMLGGKTVIQRVYEQVAGILDDAYVATDDERIEAAVKAFGGKVVMTSIDHKSGTDRCYEACTKIGGDFDVVVNIQGDEPFIQPSQLNAVKACFEDPTTQIATLVKPFTADEPFAVLENVNSPKVVLNKNWNALYFSRSIIPFQRNADKEDWLKGHTYYKHIGLYAYRTEVLKEITALPQSSLELAESLEQLRWLENGYKIKVGISDVETIGIDTPQDLKHAEEFLKNRS.

The protein belongs to the KdsB family.

It localises to the cytoplasm. The catalysed reaction is 3-deoxy-alpha-D-manno-oct-2-ulosonate + CTP = CMP-3-deoxy-beta-D-manno-octulosonate + diphosphate. The protein operates within nucleotide-sugar biosynthesis; CMP-3-deoxy-D-manno-octulosonate biosynthesis; CMP-3-deoxy-D-manno-octulosonate from 3-deoxy-D-manno-octulosonate and CTP: step 1/1. It functions in the pathway bacterial outer membrane biogenesis; lipopolysaccharide biosynthesis. In terms of biological role, activates KDO (a required 8-carbon sugar) for incorporation into bacterial lipopolysaccharide in Gram-negative bacteria. The polypeptide is 3-deoxy-manno-octulosonate cytidylyltransferase (Bacteroides thetaiotaomicron (strain ATCC 29148 / DSM 2079 / JCM 5827 / CCUG 10774 / NCTC 10582 / VPI-5482 / E50)).